The sequence spans 117 residues: Large ribosomal subunit protein uL18 (117 aa).

This sequence belongs to the universal ribosomal protein uL18 family. As to quaternary structure, part of the 50S ribosomal subunit; part of the 5S rRNA/L5/L18/L25 subcomplex. Contacts the 5S and 23S rRNAs.

In terms of biological role, this is one of the proteins that bind and probably mediate the attachment of the 5S RNA into the large ribosomal subunit, where it forms part of the central protuberance. The protein is Large ribosomal subunit protein uL18 of Aeromonas salmonicida (strain A449).